Here is a 283-residue protein sequence, read N- to C-terminus: Pantothenate synthetase (283 aa).

30 to 37 is an ATP binding site; sequence MGALHEGH. H37 functions as the Proton donor in the catalytic mechanism. Residue Q61 participates in (R)-pantoate binding. Residue Q61 participates in beta-alanine binding. 147 to 150 is an ATP binding site; the sequence is GEKD. Q153 serves as a coordination point for (R)-pantoate. ATP contacts are provided by residues I176 and 184-187; that span reads VSSR.

Belongs to the pantothenate synthetase family. Homodimer.

It is found in the cytoplasm. It carries out the reaction (R)-pantoate + beta-alanine + ATP = (R)-pantothenate + AMP + diphosphate + H(+). It participates in cofactor biosynthesis; (R)-pantothenate biosynthesis; (R)-pantothenate from (R)-pantoate and beta-alanine: step 1/1. Its function is as follows. Catalyzes the condensation of pantoate with beta-alanine in an ATP-dependent reaction via a pantoyl-adenylate intermediate. The polypeptide is Pantothenate synthetase (Chlorobium phaeobacteroides (strain DSM 266 / SMG 266 / 2430)).